The following is a 447-amino-acid chain: Na(+)-translocating NADH-quinone reductase subunit A (447 aa).

It belongs to the NqrA family. In terms of assembly, composed of six subunits; NqrA, NqrB, NqrC, NqrD, NqrE and NqrF.

The enzyme catalyses a ubiquinone + n Na(+)(in) + NADH + H(+) = a ubiquinol + n Na(+)(out) + NAD(+). Its function is as follows. NQR complex catalyzes the reduction of ubiquinone-1 to ubiquinol by two successive reactions, coupled with the transport of Na(+) ions from the cytoplasm to the periplasm. NqrA to NqrE are probably involved in the second step, the conversion of ubisemiquinone to ubiquinol. The protein is Na(+)-translocating NADH-quinone reductase subunit A of Neisseria meningitidis serogroup A / serotype 4A (strain DSM 15465 / Z2491).